Here is a 191-residue protein sequence, read N- to C-terminus: dTTP/UTP pyrophosphatase (191 aa).

The active-site Proton acceptor is the D69.

The protein belongs to the Maf family. YhdE subfamily. It depends on a divalent metal cation as a cofactor.

It localises to the cytoplasm. It carries out the reaction dTTP + H2O = dTMP + diphosphate + H(+). It catalyses the reaction UTP + H2O = UMP + diphosphate + H(+). Functionally, nucleoside triphosphate pyrophosphatase that hydrolyzes dTTP and UTP. May have a dual role in cell division arrest and in preventing the incorporation of modified nucleotides into cellular nucleic acids. This Desulforamulus reducens (strain ATCC BAA-1160 / DSM 100696 / MI-1) (Desulfotomaculum reducens) protein is dTTP/UTP pyrophosphatase.